A 473-amino-acid chain; its full sequence is Ribulose bisphosphate carboxylase large chain 2 (473 aa).

Residues asparagine 116 and threonine 166 each coordinate substrate. Lysine 168 (proton acceptor) is an active-site residue. A substrate-binding site is contributed by lysine 170. 3 residues coordinate Mg(2+): lysine 194, aspartate 196, and glutamate 197. Residue lysine 194 is modified to N6-carboxylysine. Histidine 287 functions as the Proton acceptor in the catalytic mechanism. 3 residues coordinate substrate: arginine 288, histidine 320, and serine 372.

It belongs to the RuBisCO large chain family. Type I subfamily. In terms of assembly, heterohexadecamer of 8 large chains and 8 small chains. It depends on Mg(2+) as a cofactor.

The catalysed reaction is 2 (2R)-3-phosphoglycerate + 2 H(+) = D-ribulose 1,5-bisphosphate + CO2 + H2O. It catalyses the reaction D-ribulose 1,5-bisphosphate + O2 = 2-phosphoglycolate + (2R)-3-phosphoglycerate + 2 H(+). Its function is as follows. RuBisCO catalyzes two reactions: the carboxylation of D-ribulose 1,5-bisphosphate, the primary event in carbon dioxide fixation, as well as the oxidative fragmentation of the pentose substrate. Both reactions occur simultaneously and in competition at the same active site. The chain is Ribulose bisphosphate carboxylase large chain 2 from Cereibacter sphaeroides (strain ATCC 17025 / ATH 2.4.3) (Rhodobacter sphaeroides).